The chain runs to 211 residues: Small ribosomal subunit protein uS5 (211 aa).

The region spanning 58–121 (FEERIVKLKR…KKAHNSIHTV (64 aa)) is the S5 DRBM domain.

This sequence belongs to the universal ribosomal protein uS5 family. Part of the 30S ribosomal subunit. Contacts proteins S4 and S8.

Functionally, with S4 and S12 plays an important role in translational accuracy. In terms of biological role, located at the back of the 30S subunit body where it stabilizes the conformation of the head with respect to the body. The polypeptide is Small ribosomal subunit protein uS5 (Mycoplasma genitalium (strain ATCC 33530 / DSM 19775 / NCTC 10195 / G37) (Mycoplasmoides genitalium)).